A 143-amino-acid polypeptide reads, in one-letter code: Large ribosomal subunit protein uL16 (143 aa).

It belongs to the universal ribosomal protein uL16 family. As to quaternary structure, part of the 50S ribosomal subunit.

Binds 23S rRNA and is also seen to make contacts with the A and possibly P site tRNAs. This is Large ribosomal subunit protein uL16 from Caulobacter vibrioides (strain ATCC 19089 / CIP 103742 / CB 15) (Caulobacter crescentus).